The sequence spans 402 residues: S-adenosylmethionine synthase (402 aa).

His15 contributes to the ATP binding site. Asp17 contacts Mg(2+). Glu43 is a binding site for K(+). 2 residues coordinate L-methionine: Glu56 and Gln99. Residues 99 to 109 (QSPDIAQGVDT) form a flexible loop region. ATP-binding positions include 174–176 (DGK), 247–248 (RF), Asp256, 262–263 (RK), Ala279, and Lys283. Asp256 lines the L-methionine pocket. Lys287 contacts L-methionine.

The protein belongs to the AdoMet synthase family. As to quaternary structure, homotetramer; dimer of dimers. Mg(2+) is required as a cofactor. The cofactor is K(+).

It is found in the cytoplasm. It catalyses the reaction L-methionine + ATP + H2O = S-adenosyl-L-methionine + phosphate + diphosphate. Its pathway is amino-acid biosynthesis; S-adenosyl-L-methionine biosynthesis; S-adenosyl-L-methionine from L-methionine: step 1/1. Catalyzes the formation of S-adenosylmethionine (AdoMet) from methionine and ATP. The overall synthetic reaction is composed of two sequential steps, AdoMet formation and the subsequent tripolyphosphate hydrolysis which occurs prior to release of AdoMet from the enzyme. The sequence is that of S-adenosylmethionine synthase from Streptomyces avermitilis (strain ATCC 31267 / DSM 46492 / JCM 5070 / NBRC 14893 / NCIMB 12804 / NRRL 8165 / MA-4680).